The chain runs to 195 residues: Imidazoleglycerol-phosphate dehydratase (195 aa).

Belongs to the imidazoleglycerol-phosphate dehydratase family.

It is found in the cytoplasm. It catalyses the reaction D-erythro-1-(imidazol-4-yl)glycerol 3-phosphate = 3-(imidazol-4-yl)-2-oxopropyl phosphate + H2O. The protein operates within amino-acid biosynthesis; L-histidine biosynthesis; L-histidine from 5-phospho-alpha-D-ribose 1-diphosphate: step 6/9. The sequence is that of Imidazoleglycerol-phosphate dehydratase from Geobacter sulfurreducens (strain ATCC 51573 / DSM 12127 / PCA).